A 1071-amino-acid chain; its full sequence is DNA-directed RNA polymerase subunit beta (1071 aa).

The protein belongs to the RNA polymerase beta chain family. As to quaternary structure, in plastids the minimal PEP RNA polymerase catalytic core is composed of four subunits: alpha, beta, beta', and beta''. When a (nuclear-encoded) sigma factor is associated with the core the holoenzyme is formed, which can initiate transcription.

The protein localises to the plastid. Its subcellular location is the chloroplast. It catalyses the reaction RNA(n) + a ribonucleoside 5'-triphosphate = RNA(n+1) + diphosphate. DNA-dependent RNA polymerase catalyzes the transcription of DNA into RNA using the four ribonucleoside triphosphates as substrates. The sequence is that of DNA-directed RNA polymerase subunit beta from Drimys granadensis.